The following is a 533-amino-acid chain: D-2-hydroxyglutarate dehydrogenase, mitochondrial (533 aa).

Residues 1 to 55 constitute a mitochondrion transit peptide; sequence MGLFQKCSRLSLRSSYMWSVCPQYSIAVTARETPDRALIVHWTQHRDVHNSRRLG. The region spanning 107-286 is the FAD-binding PCMH-type domain; it reads VQGSSDVLLR…TAVSILCPRK (180 aa). The (R)-2-hydroxyglutarate site is built by arginine 397, threonine 401, and lysine 412. Residue arginine 397 participates in (R)-lactate binding. (R)-malate is bound by residues arginine 397, threonine 401, and lysine 412. Residues histidine 445 and histidine 452 each coordinate Zn(2+). Asparagine 454 is a binding site for (R)-2-hydroxyglutarate. Zn(2+) is bound at residue glutamate 486. Histidine 487 serves as a coordination point for (R)-2-hydroxyglutarate. Histidine 487 is a binding site for (R)-lactate. (R)-malate is bound at residue histidine 487.

This sequence belongs to the FAD-binding oxidoreductase/transferase type 4 family. It depends on FAD as a cofactor.

The protein resides in the mitochondrion. It carries out the reaction (R)-2-hydroxyglutarate + A = 2-oxoglutarate + AH2. It catalyses the reaction (R)-malate + A = oxaloacetate + AH2. Its function is as follows. Catalyzes the oxidation of D-2-hydroxyglutarate (D-2-HG) to alpha-ketoglutarate. Also catalyzes the oxidation of other D-2-hydroxyacids, such as D-malate (D-MAL) and D-lactate (D-LAC). Exhibits high activities towards D-2-HG and D-MAL but a very weak activity towards D-LAC. This chain is D-2-hydroxyglutarate dehydrogenase, mitochondrial (d2hgdh), found in Danio rerio (Zebrafish).